The following is a 370-amino-acid chain: Protein-tyrosine sulfotransferase 1 (370 aa).

Topologically, residues 1–8 (MVGKLKQN) are cytoplasmic. Residues 9–25 (LLLACLVISSVTVFYLG) form a helical; Signal-anchor for type II membrane protein membrane-spanning segment. Residues 26–370 (QHAMECHHRI…KEKPQTEQVE (345 aa)) are Lumenal-facing. Asparagine 60 carries N-linked (GlcNAc...) asparagine glycosylation. 79–83 (RSGTT) contributes to the 3'-phosphoadenylyl sulfate binding site. Cysteine 97 and cysteine 157 are disulfide-bonded. Glutamate 100 (proton donor/acceptor) is an active-site residue. The interaction with peptide substrate stretch occupies residues 102-106 (RVIPR). 3 residues coordinate 3'-phosphoadenylyl sulfate: arginine 184, serine 192, and arginine 196. A disulfide bridge links cysteine 226 with cysteine 234. Tyrosine 239 is a 3'-phosphoadenylyl sulfate binding site. The N-linked (GlcNAc...) asparagine glycan is linked to asparagine 262. 3'-phosphoadenylyl sulfate contacts are provided by residues 286–295 (STDQVIKPVN) and lysine 301.

Belongs to the protein sulfotransferase family. In terms of assembly, homodimer. Can also form heterodimers with TPST2. Post-translationally, N-glycosylated. As to expression, ubiquitous. Detected in heart, brain, lung, liver, spleen, kidney, skeletal muscle and testis.

Its subcellular location is the golgi apparatus membrane. The enzyme catalyses L-tyrosyl-[protein] + 3'-phosphoadenylyl sulfate = O-sulfo-L-tyrosine-[protein] + adenosine 3',5'-bisphosphate + H(+). Catalyzes the O-sulfation of tyrosine residues within acidic motifs of polypeptides, using 3'-phosphoadenylyl sulfate (PAPS) as cosubstrate. In Mus musculus (Mouse), this protein is Protein-tyrosine sulfotransferase 1 (Tpst1).